We begin with the raw amino-acid sequence, 83 residues long: Beta/kappa-theraphotoxin-Cg2a (83 aa).

The N-terminal stretch at 1 to 21 (MKASVFAVILGLVVLCACSFA) is a signal peptide. Positions 22-53 (EDEQDQFVSPNELLKSMFVESRHEFTPEVEGR) are excised as a propeptide. Cystine bridges form between Cys-55/Cys-69, Cys-62/Cys-74, and Cys-68/Cys-78. Residue Ile-82 is modified to Isoleucine amide.

Belongs to the neurotoxin 30 (phrixotoxin) family. As to expression, expressed by the venom gland.

Its subcellular location is the secreted. This gating-modifier toxin shows an important inhibitory activity on sodium channels. It is very active on Nav1.7/SCN9A (IC(50)~0.6 nM), and also shows activity on Nav1.3/SCN3A (IC(50)=292 nM), Nav1.4/SCN4A (IC(50)=2.2-159 nM), and Nav1.5/SCN5A (IC(50)=2.3-2.9 uM). It has also been shown to inhibit tetrodotoxin (TTX)-resistant (IC(50)=27.6 nM) and TTX-sensitive (IC(50)=30.2 nM) sodium channels in rat dorsal root ganglion neurons. Lower inhibitory activity has also been shown on potassium channels: Kv4.2/KCND2 (IC(50)=604.2 nM), Kv4.3/KCND3 (IC(50)=425.1 nM), and Kv2.1/KCNB1 (IC(50)=14.3 uM). It binds to phospholipid membranes. Like its analog AM-8145, it may act by interacting only with the second voltage-sensor domain of Nav1.7/SCN9A. The protein is Beta/kappa-theraphotoxin-Cg2a of Chilobrachys guangxiensis (Chinese earth tiger tarantula).